The chain runs to 195 residues: Putative NADH dehydrogenase/NAD(P)H nitroreductase Bcep18194_B1060 (195 aa).

This sequence belongs to the nitroreductase family. HadB/RutE subfamily. The cofactor is FMN.

The sequence is that of Putative NADH dehydrogenase/NAD(P)H nitroreductase Bcep18194_B1060 from Burkholderia lata (strain ATCC 17760 / DSM 23089 / LMG 22485 / NCIMB 9086 / R18194 / 383).